We begin with the raw amino-acid sequence, 817 residues long: Leucine--tRNA ligase (817 aa).

The 'HIGH' region signature appears at 42–52 (PYPSGRLHMGH). The 'KMSKS' region signature appears at 576-580 (KMSKS). Position 579 (lysine 579) interacts with ATP.

The protein belongs to the class-I aminoacyl-tRNA synthetase family.

It is found in the cytoplasm. It catalyses the reaction tRNA(Leu) + L-leucine + ATP = L-leucyl-tRNA(Leu) + AMP + diphosphate. The sequence is that of Leucine--tRNA ligase from Halorhodospira halophila (strain DSM 244 / SL1) (Ectothiorhodospira halophila (strain DSM 244 / SL1)).